The following is a 109-amino-acid chain: Nucleoid-associated protein LGAS_0369 (109 aa).

The protein belongs to the YbaB/EbfC family. In terms of assembly, homodimer.

It is found in the cytoplasm. It localises to the nucleoid. Functionally, binds to DNA and alters its conformation. May be involved in regulation of gene expression, nucleoid organization and DNA protection. The polypeptide is Nucleoid-associated protein LGAS_0369 (Lactobacillus gasseri (strain ATCC 33323 / DSM 20243 / BCRC 14619 / CIP 102991 / JCM 1131 / KCTC 3163 / NCIMB 11718 / NCTC 13722 / AM63)).